The sequence spans 89 residues: UPF0473 protein Helmi_02360 (89 aa).

The protein belongs to the UPF0473 family.

This Heliobacterium modesticaldum (strain ATCC 51547 / Ice1) protein is UPF0473 protein Helmi_02360.